We begin with the raw amino-acid sequence, 1079 residues long: Electrogenic sodium bicarbonate cotransporter 1 (1079 aa).

Positions 1–62 are required for interaction with AHCYL1; the sequence is MEDEAVLDRG…EKREKERISE (62 aa). At 1-466 the chain is on the cytoplasmic side; the sequence is MEDEAVLDRG…FASDFYDALN (466 aa). Tyrosine 30 is modified (phosphotyrosine). The segment covering 39 to 52 has biased composition (basic residues); that stretch reads YRRRRRHKRKTGHK. A disordered region spans residues 39 to 78; that stretch reads YRRRRRHKRKTGHKEKREKERISENYSDKSDVENADESSS. Threonine 49 carries the phosphothreonine; by PKA modification. Basic and acidic residues predominate over residues 53-70; sequence EKREKERISENYSDKSDV. Phosphoserine occurs at positions 61, 65, 68, 223, 232, 233, and 245. Residues 237-265 are disordered; it reads MFTSPDNGSPAMTHRNLTSSSLNDISDKP. Residues threonine 249 and threonine 254 each carry the phosphothreonine modification. Residues 251–260 are compositionally biased toward polar residues; that stretch reads RNLTSSSLND. 3 positions are modified to phosphoserine: serine 256, serine 257, and serine 262. A helical membrane pass occupies residues 467 to 491; that stretch reads IQSLSAILFIYLATVTNAITFGGLL. Over 492–501 the chain is Extracellular; it reads GDATDNMQGV. The chain crosses the membrane as a helical span at residues 502 to 520; it reads LESFLGTAVSGAIFCLFAG. Residue glutamine 521 is a topological domain, cytoplasmic. Residues 522–542 form a discontinuously helical membrane-spanning segment; that stretch reads PLTILSSTGPVLVFERLLFNF. Topologically, residues 543 to 550 are extracellular; sequence SKDHNFDY. A helical membrane pass occupies residues 551–571; it reads LEFRLWIGLWSAFLCLILVAT. Residues 572–585 lie on the Cytoplasmic side of the membrane; the sequence is DASFLVQYFTRFTE. A helical transmembrane segment spans residues 586–609; the sequence is EGFSSLISFIFIYDAFKKMIKLAD. Residues 610–692 lie on the Extracellular side of the membrane; sequence YYPINSDFKV…GNNCNFVPDV (83 aa). A helical membrane pass occupies residues 693–710; it reads TLMSFILFLGTYTSSMAL. At 711–725 the chain is on the cytoplasmic side; the sequence is KKFKTSRYFPTTARK. A helical membrane pass occupies residues 726–745; it reads LISDFAIILSILIFCVIDAL. At 746–779 the chain is on the extracellular side; it reads VGVDTPKLIVPSEFKPTSPNRGWFVPPFGGNPWW. An interaction with CA4 region spans residues 748-779; the sequence is VDTPKLIVPSEFKPTSPNRGWFVPPFGGNPWW. Residues 780–807 traverse the membrane as a helical segment; it reads VYLAAAIPALLVTILIFMDQQITAVIVN. The Cytoplasmic segment spans residues 808–819; the sequence is RKEHKLKKGAGY. A helical membrane pass occupies residues 820–836; the sequence is HLDLFWVAILMVVCSFM. Residue alanine 837 is a topological domain, extracellular. Residues 838–855 traverse the membrane as a discontinuously helical segment; that stretch reads LPWYVAATVISIAHIDSL. Residues 856 to 877 are Cytoplasmic-facing; it reads KMETETSAPGEQPKFLGVREQR. Residues 878-894 form a helical membrane-spanning segment; sequence VTGTLVFILTGLSVFMA. Residues 895–901 lie on the Extracellular side of the membrane; sequence PILKFIP. The helical transmembrane segment at 902–918 threads the bilayer; that stretch reads MPVLYGVFLYMGVASLN. At 919 to 960 the chain is on the cytoplasmic side; it reads GVQFMDRLKLLLMPLKHQPDFIYLRHVPLRRVHLFTFLQVLC. Residues 961–986 constitute an intramembrane region (discontinuously helical); sequence LALLWILKSTVAAIIFPVMILALVAV. At 987–1079 the chain is on the cytoplasmic side; the sequence is RKGMDYLFSQ…STFLERHTSC (93 aa). The interval 1002–1004 is CA2-binding; the sequence is LDD. A disordered region spans residues 1012 to 1079; that stretch reads KKKEDEKKKK…STFLERHTSC (68 aa). Serine 1026 is subject to Phosphoserine; by PKA. Serine 1029 carries the phosphoserine modification. Positions 1030 to 1033 are CA2-binding; the sequence is DNDD. Serine 1034 and serine 1044 each carry phosphoserine. Residues 1057–1059 form a required for basolateral targeting region; sequence FLS. The segment covering 1062–1079 has biased composition (basic and acidic residues); that stretch reads KPSDREKSSTFLERHTSC. Serine 1069 carries the phosphoserine modification.

This sequence belongs to the anion exchanger (TC 2.A.31) family. As to quaternary structure, homodimer. Interacts with CA2/carbonic anhydrase 2 and CA4/carbonic anhydrase 4 which may regulate transporter activity. Isoform 1 but not isoform 2 interacts with AHCYL1 (via PEST domain when phosphorylated); the interaction increases SLC4A4 isoform 1 activity. Interacts with AHCYL2. Phosphorylation of Ser-1026 by PKA increases the binding of CA2 and changes the Na(+):HCO3(-) stoichiometry of the transporter from 3:1 to 2:1. Phosphorylated in presence of STK39 and dephosphorylated in presence of PP1 phosphatase; phosphorylation seems to inhibit SLC4A4 activity. In terms of processing, N-glycosylated. May not be necessary for the transporter basic functions. Expressed in colonic mucosa, kidney cortex and to gastric mucosa.

Its subcellular location is the basolateral cell membrane. It localises to the cell membrane. It carries out the reaction 2 hydrogencarbonate(out) + Na(+)(out) = 2 hydrogencarbonate(in) + Na(+)(in). The catalysed reaction is 3 hydrogencarbonate(out) + Na(+)(out) = 3 hydrogencarbonate(in) + Na(+)(in). In terms of biological role, electrogenic sodium/bicarbonate cotransporter with a Na(+):HCO3(-) stoichiometry varying from 1:2 to 1:3. May regulate bicarbonate influx/efflux at the basolateral membrane of cells and regulate intracellular pH. This is Electrogenic sodium bicarbonate cotransporter 1 (SLC4A4) from Oryctolagus cuniculus (Rabbit).